The following is a 142-amino-acid chain: Large ribosomal subunit protein uL13 (142 aa).

The protein belongs to the universal ribosomal protein uL13 family. As to quaternary structure, part of the 50S ribosomal subunit.

Its function is as follows. This protein is one of the early assembly proteins of the 50S ribosomal subunit, although it is not seen to bind rRNA by itself. It is important during the early stages of 50S assembly. The sequence is that of Large ribosomal subunit protein uL13 from Haemophilus influenzae (strain 86-028NP).